A 359-amino-acid polypeptide reads, in one-letter code: MSVADSSAADSVAAPDTADTSSSVGVFSPPGYYDALAQQVLDGTPITREQALAMLEASDLDVPAIISAGYRIRHQYFGNTVQLYFLMNAKSGLCPEDCHYCSQSKVSDAPVPKYNILKRDALMDAAKVAAERGAKTYCLVISARGPNEREMKAVEEIVPEIKQKYNLDICACLGLLDESQAARLKACGVDRVNHNLNSSESHYEKICTTHTYEDRVQTLRHVRDAGMEMCSGGIIGMGESKSDIVSMAFDLNELGVQSIPVNILNAIDGTPLEGTAALTPQDALKALAMFRFVNPDRELRIAGGRELHLRQLQPMGLYVANSVFVGDYLTTQGQAPQADYDMIRDLGFDVTGSCEEMSI.

The segment at 1–23 (MSVADSSAADSVAAPDTADTSSS) is disordered. The Radical SAM core domain maps to 76–302 (YFGNTVQLYF…VNPDRELRIA (227 aa)). Positions 94, 98, and 101 each coordinate [4Fe-4S] cluster. [2Fe-2S] cluster contacts are provided by Cys138, Cys170, Cys230, and Arg300.

Belongs to the radical SAM superfamily. Biotin synthase family. As to quaternary structure, homodimer. [4Fe-4S] cluster is required as a cofactor. Requires [2Fe-2S] cluster as cofactor.

The catalysed reaction is (4R,5S)-dethiobiotin + (sulfur carrier)-SH + 2 reduced [2Fe-2S]-[ferredoxin] + 2 S-adenosyl-L-methionine = (sulfur carrier)-H + biotin + 2 5'-deoxyadenosine + 2 L-methionine + 2 oxidized [2Fe-2S]-[ferredoxin]. Its pathway is cofactor biosynthesis; biotin biosynthesis; biotin from 7,8-diaminononanoate: step 2/2. Catalyzes the conversion of dethiobiotin (DTB) to biotin by the insertion of a sulfur atom into dethiobiotin via a radical-based mechanism. The polypeptide is Biotin synthase (Rhodopirellula baltica (strain DSM 10527 / NCIMB 13988 / SH1)).